The sequence spans 231 residues: MTPDQVIVALDVPDLPKAIALVDRLPGVGFWKVGLELFVGAGPVILAELKDRGKRIFLDLKFHDIPNTMLGACLSASRYEVDLLTLHATAGSQALTLAAQAMAPLPHPPKLLAITLLTSIGDRQLREELQQPLAVDDYVNAMARLARNAGIDGAVCSPQEVAKLRQTCGPEFLLVTPGVRPLWSAPGDQQRVMIPAQAIAAGANYVVIGRPITADPSPEAAWERLCQDLAV.

Substrate-binding positions include Asp-11, Lys-32, 59–68 (DLKFHDIPNT), Thr-118, Arg-180, Gln-189, Gly-209, and Arg-210. Lys-61 (proton donor) is an active-site residue.

This sequence belongs to the OMP decarboxylase family. Type 1 subfamily. Homodimer.

It carries out the reaction orotidine 5'-phosphate + H(+) = UMP + CO2. It participates in pyrimidine metabolism; UMP biosynthesis via de novo pathway; UMP from orotate: step 2/2. Functionally, catalyzes the decarboxylation of orotidine 5'-monophosphate (OMP) to uridine 5'-monophosphate (UMP). In Synechocystis sp. (strain ATCC 27184 / PCC 6803 / Kazusa), this protein is Orotidine 5'-phosphate decarboxylase.